The primary structure comprises 258 residues: Imidazole glycerol phosphate synthase subunit HisF (258 aa).

Active-site residues include aspartate 11 and aspartate 130.

It belongs to the HisA/HisF family. Heterodimer of HisH and HisF.

Its subcellular location is the cytoplasm. It carries out the reaction 5-[(5-phospho-1-deoxy-D-ribulos-1-ylimino)methylamino]-1-(5-phospho-beta-D-ribosyl)imidazole-4-carboxamide + L-glutamine = D-erythro-1-(imidazol-4-yl)glycerol 3-phosphate + 5-amino-1-(5-phospho-beta-D-ribosyl)imidazole-4-carboxamide + L-glutamate + H(+). It participates in amino-acid biosynthesis; L-histidine biosynthesis; L-histidine from 5-phospho-alpha-D-ribose 1-diphosphate: step 5/9. Functionally, IGPS catalyzes the conversion of PRFAR and glutamine to IGP, AICAR and glutamate. The HisF subunit catalyzes the cyclization activity that produces IGP and AICAR from PRFAR using the ammonia provided by the HisH subunit. This Magnetococcus marinus (strain ATCC BAA-1437 / JCM 17883 / MC-1) protein is Imidazole glycerol phosphate synthase subunit HisF.